A 549-amino-acid chain; its full sequence is Chaperonin GroEL (549 aa).

Residues 30–33 (TLGP), lysine 51, 87–91 (DGTTT), glycine 415, and aspartate 495 contribute to the ATP site.

This sequence belongs to the chaperonin (HSP60) family. In terms of assembly, forms a cylinder of 14 subunits composed of two heptameric rings stacked back-to-back. Interacts with the co-chaperonin GroES.

It localises to the cytoplasm. It carries out the reaction ATP + H2O + a folded polypeptide = ADP + phosphate + an unfolded polypeptide.. In terms of biological role, together with its co-chaperonin GroES, plays an essential role in assisting protein folding. The GroEL-GroES system forms a nano-cage that allows encapsulation of the non-native substrate proteins and provides a physical environment optimized to promote and accelerate protein folding. This is Chaperonin GroEL from Hahella chejuensis (strain KCTC 2396).